Here is a 357-residue protein sequence, read N- to C-terminus: Probable protein phosphatase 2C 60 (357 aa).

Positions 23–329 (RYGLSSMQGW…DNMTMILVRF (307 aa)) constitute a PPM-type phosphatase domain. Mn(2+) is bound by residues aspartate 57, glycine 58, aspartate 272, and aspartate 320. The interval 331 to 357 (NPTPSETELKPEASQAEGNHDEPSSSN) is disordered. Basic and acidic residues predominate over residues 348 to 357 (GNHDEPSSSN).

Belongs to the PP2C family. Mg(2+) serves as cofactor. The cofactor is Mn(2+).

It carries out the reaction O-phospho-L-seryl-[protein] + H2O = L-seryl-[protein] + phosphate. It catalyses the reaction O-phospho-L-threonyl-[protein] + H2O = L-threonyl-[protein] + phosphate. In Arabidopsis thaliana (Mouse-ear cress), this protein is Probable protein phosphatase 2C 60.